The following is a 273-amino-acid chain: Outer surface protein A (273 aa).

The signal sequence occupies residues 1 to 16 (MKKYLLGIGLILALIA). A lipid anchor (N-palmitoyl cysteine) is attached at cysteine 17. Cysteine 17 carries S-diacylglycerol cysteine lipidation.

Belongs to the OspA lipoprotein family.

The protein resides in the cell outer membrane. It localises to the cell surface. In terms of biological role, induces host (human and mouse) cytokine release by monocyte cell lines via TLR2 and CD14; nonlipidated protein does not stimulate host cells. This Borreliella burgdorferi (strain ATCC 35210 / DSM 4680 / CIP 102532 / B31) (Borrelia burgdorferi) protein is Outer surface protein A.